Here is a 1587-residue protein sequence, read N- to C-terminus: NHS-like protein 1 (1587 aa).

Phosphoserine is present on Ser-24. Disordered regions lie at residues 140 to 163 (FAAG…KCSL) and 176 to 202 (RPKT…PLPT). A compositionally biased stretch (polar residues) spans 179–196 (TPTSGDFSDLHTQTNWTK). Ser-197 and Ser-328 each carry phosphoserine. Positions 431-446 (SAGQLDSRTPGSSSYS) are enriched in polar residues. 2 disordered regions span residues 431 to 470 (SAGQ…PRHH) and 549 to 584 (SEPW…VSSC). Residues 449-470 (KPRDRPTPRCSVKDDHQSPRHH) are compositionally biased toward basic and acidic residues. Ser-563 is modified (phosphoserine). A compositionally biased stretch (polar residues) spans 573–584 (GCSTPTSNVSSC). At Ser-629 the chain carries Phosphoserine. Disordered stretches follow at residues 661–687 (KAKK…QTNG), 705–767 (SLPG…SSVK), and 789–1059 (NPTG…RPPM). Residues 705-720 (SLPGKGGSSPSQSPCS) are compositionally biased toward low complexity. 4 stretches are compositionally biased toward polar residues: residues 730-750 (SRSQ…TPNV), 757-767 (TPSQSDTSSVK), 792-801 (GGCSANTEAA), and 838-855 (RVTS…TPTA). Positions 885 to 911 (SLISSMSISSSSTSLSSNTSTEGSGTM) are enriched in low complexity. Composition is skewed to pro residues over residues 923 to 934 (APPPPPLPPLPS), 958 to 972 (PLPP…PPEA), and 998 to 1021 (SLPP…PPLD). The span at 1040 to 1055 (SSREALRRPANKEEGC) shows a compositional bias: basic and acidic residues. Phosphoserine is present on Ser-1079. Disordered stretches follow at residues 1083 to 1534 (AVLF…ARRA) and 1565 to 1587 (VDGI…EQKS). 2 stretches are compositionally biased toward polar residues: residues 1089-1099 (PSAQEQRTPTA) and 1112-1141 (SRNS…SQSQ). 2 positions are modified to phosphoserine: Ser-1157 and Ser-1218. Residues 1222–1234 (AEGEAVRSQEEKS) show a composition bias toward basic and acidic residues. The segment covering 1275-1285 (QPNTSPGPTQE) has biased composition (polar residues). The span at 1360 to 1370 (GRKDSEDDHTR) shows a compositional bias: basic and acidic residues. A phosphoserine mark is found at Ser-1373 and Ser-1375. A Phosphothreonine modification is found at Thr-1379. Residues 1392-1409 (QVGSIQRSIKKSTTSSDN) show a composition bias toward polar residues. The span at 1434–1447 (KSTDPRFQRSRSEP) shows a compositional bias: basic and acidic residues. Composition is skewed to low complexity over residues 1448–1460 (SADS…SCSP) and 1484–1503 (SGPR…SRYS). Positions 1576-1587 (PSEQCGGTEQKS) are enriched in polar residues.

The protein belongs to the NHS family.

The sequence is that of NHS-like protein 1 (Nhsl1) from Mus musculus (Mouse).